Reading from the N-terminus, the 127-residue chain is Glycine cleavage system H protein (127 aa).

The 83-residue stretch at 22-104 (EVVIGITHFA…YEGAWMVKVE (83 aa)) folds into the Lipoyl-binding domain. An N6-lipoyllysine modification is found at Lys-63.

Belongs to the GcvH family. In terms of assembly, the glycine cleavage system is composed of four proteins: P, T, L and H. Requires (R)-lipoate as cofactor.

The glycine cleavage system catalyzes the degradation of glycine. The H protein shuttles the methylamine group of glycine from the P protein to the T protein. Functionally, is also involved in protein lipoylation via its role as an octanoyl/lipoyl carrier protein intermediate. The chain is Glycine cleavage system H protein from Bacillus cereus (strain G9842).